Consider the following 446-residue polypeptide: Probable D-serine dehydratase (446 aa).

Residue Lys118 is modified to N6-(pyridoxal phosphate)lysine.

The protein belongs to the serine/threonine dehydratase family. DsdA subfamily. Requires pyridoxal 5'-phosphate as cofactor.

It carries out the reaction D-serine = pyruvate + NH4(+). The protein is Probable D-serine dehydratase of Ectopseudomonas mendocina (strain ymp) (Pseudomonas mendocina).